Reading from the N-terminus, the 365-residue chain is Fatty acid hydroxylase vlmA (365 aa).

The segment at 20-41 (TTIKRRQNDKTKTPKTKPVSKI) is disordered. N-linked (GlcNAc...) asparagine glycosylation occurs at Asn47. The next 4 membrane-spanning stretches (helical) occupy residues 62-82 (ILLQ…VLSI), 89-109 (VHPF…FRFL), 144-164 (LNWS…LVAY), and 179-199 (WWAW…FYYY). One can recognise a Fatty acid hydroxylase domain in the interval 189 to 335 (LYPIILDFYY…TRIWDRLFGT (147 aa)).

This sequence belongs to the sterol desaturase family. TMEM195 subfamily.

It is found in the membrane. It participates in secondary metabolite biosynthesis. Its function is as follows. Fatty acid hydroxylase; part of the gene cluster that mediates the biosynthesis of verlamelin, a lipopeptide that exhibits antifungal activity against plant pathogenic fungi. Verlamelin is a cyclic hexadepsipeptide and is bridged by ester bonding between a 5-hydroxytetradecanoic acid moiety and a carboxyl group on the terminal Val of amide-bonded tetradecanoyl-hexapeptide D-allo-Thr-D-Ala-L-Pro-L-Gln-D-Tyr-L-Val. VlmA and vlmB are altogether regarded as essential components in the biosynthesis of 5-hydroxytetradecanoic acid. VlmA catalyzes the hydroxylation at position C5 of tetradecanoic acid produced in primary metabolism, while the precise function of vlmB still remains to be solved. To be loaded onto the waiting NRPS, 5-hydroxytetradecanoic acid is activated in the form of acyladenylate by the AMP-dependent ligase vlmC. VlmS seems to accept the fatty-acyl intermediate onto the initial module to further elongate amino acid residues by the downstream modules. In addition, in the last module at its C-terminus, vlmS contains a surplus condensation (C) domain that may be involved in cyclization, the last step to form verlamelin. The chain is Fatty acid hydroxylase vlmA from Lecanicillium sp.